The following is a 430-amino-acid chain: Serine hydroxymethyltransferase (430 aa).

Residue G120–I122 participates in (6S)-5,6,7,8-tetrahydrofolate binding. K226 carries the N6-(pyridoxal phosphate)lysine modification.

The protein belongs to the SHMT family. Homodimer. Pyridoxal 5'-phosphate serves as cofactor.

The protein resides in the cytoplasm. Its pathway is amino-acid biosynthesis; glycine biosynthesis; glycine from L-serine: step 1/1. Its function is as follows. Catalyzes the reversible interconversion of serine and glycine with a modified folate serving as the one-carbon carrier. Also exhibits a pteridine-independent aldolase activity toward beta-hydroxyamino acids, producing glycine and aldehydes, via a retro-aldol mechanism. In Pyrobaculum calidifontis (strain DSM 21063 / JCM 11548 / VA1), this protein is Serine hydroxymethyltransferase.